Consider the following 37-residue polypeptide: Antifungal protein S (37 aa).

This sequence belongs to the thaumatin family.

Its function is as follows. Has antifungal activity. Inhibits the growth of Trichoderma viridae and Candida albicans. The sequence is that of Antifungal protein S from Hordeum vulgare (Barley).